The primary structure comprises 423 residues: Histidine--tRNA ligase (423 aa).

The protein belongs to the class-II aminoacyl-tRNA synthetase family. As to quaternary structure, homodimer.

It localises to the cytoplasm. The catalysed reaction is tRNA(His) + L-histidine + ATP = L-histidyl-tRNA(His) + AMP + diphosphate + H(+). The chain is Histidine--tRNA ligase (hisS) from Pasteurella multocida (strain Pm70).